The sequence spans 202 residues: Probable nicotinate-nucleotide adenylyltransferase (202 aa).

The protein belongs to the NadD family.

It catalyses the reaction nicotinate beta-D-ribonucleotide + ATP + H(+) = deamido-NAD(+) + diphosphate. It participates in cofactor biosynthesis; NAD(+) biosynthesis; deamido-NAD(+) from nicotinate D-ribonucleotide: step 1/1. In terms of biological role, catalyzes the reversible adenylation of nicotinate mononucleotide (NaMN) to nicotinic acid adenine dinucleotide (NaAD). The sequence is that of Probable nicotinate-nucleotide adenylyltransferase from Clostridium perfringens (strain 13 / Type A).